Consider the following 271-residue polypeptide: Putative hydro-lyase jk0403 (271 aa).

This sequence belongs to the D-glutamate cyclase family.

The chain is Putative hydro-lyase jk0403 from Corynebacterium jeikeium (strain K411).